We begin with the raw amino-acid sequence, 338 residues long: Ketol-acid reductoisomerase (NADP(+)) (338 aa).

One can recognise a KARI N-terminal Rossmann domain in the interval 1–181; it reads MNVYYDKDCD…GGGRSGIIET (181 aa). NADP(+) contacts are provided by residues 24–27, R47, S50, S52, and 82–85; these read YGSQ and DEFQ. H107 is an active-site residue. G133 provides a ligand contact to NADP(+). The KARI C-terminal knotted domain maps to 182-327; that stretch reads TFKDETETDL…AKLRSMMPWI (146 aa). Residues D190, E194, E226, and E230 each contribute to the Mg(2+) site. A substrate-binding site is contributed by S251.

It belongs to the ketol-acid reductoisomerase family. Mg(2+) serves as cofactor.

The catalysed reaction is (2R)-2,3-dihydroxy-3-methylbutanoate + NADP(+) = (2S)-2-acetolactate + NADPH + H(+). The enzyme catalyses (2R,3R)-2,3-dihydroxy-3-methylpentanoate + NADP(+) = (S)-2-ethyl-2-hydroxy-3-oxobutanoate + NADPH + H(+). The protein operates within amino-acid biosynthesis; L-isoleucine biosynthesis; L-isoleucine from 2-oxobutanoate: step 2/4. Its pathway is amino-acid biosynthesis; L-valine biosynthesis; L-valine from pyruvate: step 2/4. Involved in the biosynthesis of branched-chain amino acids (BCAA). Catalyzes an alkyl-migration followed by a ketol-acid reduction of (S)-2-acetolactate (S2AL) to yield (R)-2,3-dihydroxy-isovalerate. In the isomerase reaction, S2AL is rearranged via a Mg-dependent methyl migration to produce 3-hydroxy-3-methyl-2-ketobutyrate (HMKB). In the reductase reaction, this 2-ketoacid undergoes a metal-dependent reduction by NADPH to yield (R)-2,3-dihydroxy-isovalerate. The chain is Ketol-acid reductoisomerase (NADP(+)) from Psychrobacter sp. (strain PRwf-1).